We begin with the raw amino-acid sequence, 171 residues long: MVKLNSNPSEKGAKPPSVEDGFQTVPLITPLEVNHLQLPAPEKVIVKTRTEYQPEQKNKGKFRVPKIAEFTVTILVSLALAFLACIVFLVVYKAFTYDHSCPEGFVYKHKRCIPASLDAYYSSQDPSSRSRFYTVISHYSVAKQSTARAIGPWLSAAAVIHEPKPPKTQGH.

The disordered stretch occupies residues 1-21 (MVKLNSNPSEKGAKPPSVEDG). At 1 to 71 (MVKLNSNPSE…FRVPKIAEFT (71 aa)) the chain is on the cytoplasmic side. Residues 72–92 (VTILVSLALAFLACIVFLVVY) traverse the membrane as a helical; Signal-anchor for type II membrane protein segment. Topologically, residues 93-171 (KAFTYDHSCP…EPKPPKTQGH (79 aa)) are lumenal.

Belongs to the NSG family.

The protein localises to the membrane. Its subcellular location is the golgi apparatus. It localises to the trans-Golgi network membrane. It is found in the cell projection. The protein resides in the dendrite. The protein localises to the endosome membrane. Its subcellular location is the early endosome membrane. It localises to the late endosome membrane. It is found in the lysosome lumen. The protein resides in the cytoplasmic vesicle membrane. The protein localises to the golgi stack membrane. Its subcellular location is the endosome. It localises to the multivesicular body membrane. In Bos taurus (Bovine), this protein is Neuronal vesicle trafficking-associated protein 2.